The primary structure comprises 472 residues: Uronate isomerase (472 aa).

This sequence belongs to the metallo-dependent hydrolases superfamily. Uronate isomerase family.

The catalysed reaction is D-glucuronate = D-fructuronate. It catalyses the reaction aldehydo-D-galacturonate = keto-D-tagaturonate. It functions in the pathway carbohydrate metabolism; pentose and glucuronate interconversion. The sequence is that of Uronate isomerase from Halalkalibacterium halodurans (strain ATCC BAA-125 / DSM 18197 / FERM 7344 / JCM 9153 / C-125) (Bacillus halodurans).